Here is a 364-residue protein sequence, read N- to C-terminus: Monocarboxylate 2-oxoacid-binding periplasmic protein all3028 (364 aa).

The first 26 residues, 1-26 (MKRREVLNTAAIATATTALVSCTQTN), serve as a signal peptide directing secretion. Substrate-binding positions include 103–104 (YY), Gln160, and Arg181. Gln160 provides a ligand contact to Na(+). Na(+) contacts are provided by Glu218, Trp219, and Glu244.

The protein belongs to the bacterial solute-binding protein 7 family. As to quaternary structure, homodimer. The complex comprises the extracytoplasmic solute receptor protein all3028, and the two putative transmembrane proteins alr3026 and alr3027.

It localises to the periplasm. Pyruvate uptake inhibited by 2-oxobutyrate, 2-oxovalerate, 2-oxoisovalerate, 2-oxoisocaproate and 2-oxo-3-methylvalerate. Functionally, part of the tripartite ATP-independent periplasmic (TRAP) transport system involved in the uptake of monocarboxylate 2-oxoacids. This protein specifically binds monocarboxylate 2-oxoacids including pyruvate, 2-oxobutyrate, 2-oxovalerate, 2-oxoisovalerate, 2-oxoisocaproate and 2-oxo-3-methylvalerate. Is not able to bind mannitol. The protein is Monocarboxylate 2-oxoacid-binding periplasmic protein all3028 of Nostoc sp. (strain PCC 7120 / SAG 25.82 / UTEX 2576).